Reading from the N-terminus, the 413-residue chain is Serine hydroxymethyltransferase (413 aa).

(6S)-5,6,7,8-tetrahydrofolate is bound by residues Leu117 and 121 to 123 (GHL). Lys226 carries the N6-(pyridoxal phosphate)lysine modification. (6S)-5,6,7,8-tetrahydrofolate is bound by residues Glu239 and 349–351 (SPF).

The protein belongs to the SHMT family. As to quaternary structure, homodimer. Pyridoxal 5'-phosphate serves as cofactor.

The protein resides in the cytoplasm. It catalyses the reaction (6R)-5,10-methylene-5,6,7,8-tetrahydrofolate + glycine + H2O = (6S)-5,6,7,8-tetrahydrofolate + L-serine. It participates in one-carbon metabolism; tetrahydrofolate interconversion. It functions in the pathway amino-acid biosynthesis; glycine biosynthesis; glycine from L-serine: step 1/1. Functionally, catalyzes the reversible interconversion of serine and glycine with tetrahydrofolate (THF) serving as the one-carbon carrier. This reaction serves as the major source of one-carbon groups required for the biosynthesis of purines, thymidylate, methionine, and other important biomolecules. Also exhibits THF-independent aldolase activity toward beta-hydroxyamino acids, producing glycine and aldehydes, via a retro-aldol mechanism. The polypeptide is Serine hydroxymethyltransferase (Bacillus mycoides (strain KBAB4) (Bacillus weihenstephanensis)).